Consider the following 151-residue polypeptide: Deoxyuridine 5'-triphosphate nucleotidohydrolase (151 aa).

Substrate is bound by residues 70 to 72 (RSG), Asn83, 87 to 89 (LID), and Met97.

The protein belongs to the dUTPase family. Requires Mg(2+) as cofactor.

The catalysed reaction is dUTP + H2O = dUMP + diphosphate + H(+). Its pathway is pyrimidine metabolism; dUMP biosynthesis; dUMP from dCTP (dUTP route): step 2/2. Its function is as follows. This enzyme is involved in nucleotide metabolism: it produces dUMP, the immediate precursor of thymidine nucleotides and it decreases the intracellular concentration of dUTP so that uracil cannot be incorporated into DNA. This is Deoxyuridine 5'-triphosphate nucleotidohydrolase from Salmonella enteritidis PT4 (strain P125109).